The chain runs to 490 residues: Selenium-binding protein 1 (490 aa).

At Ala2 the chain carries N-acetylalanine. Residues Cys21 and Cys22 each contribute to the selenite site.

Belongs to the selenium-binding protein family. Interacts with GRXS14 and GRXS16. Interacts with DALL3. In terms of tissue distribution, expressed in seedlings, roots, leaves, stems and flowers.

Its function is as follows. Binds cadmium and mediates lower sensitivity to stress requiring glutathione (GSH) for tolerance (e.g. cadmium, selenate, and hydrogen peroxide excess). Probably helps to detoxify cadmium potentially through direct binding. Binds selenium, cadmium, zinc and nickel in vitro. The chain is Selenium-binding protein 1 from Arabidopsis thaliana (Mouse-ear cress).